The following is a 338-amino-acid chain: 2-oxoglutarate-dependent dioxygenase ecdG (338 aa).

In terms of domain architecture, Fe2OG dioxygenase spans 165 to 273 (PSVTNLGFLR…KYTLAYFVRP (109 aa)). Residues His190, Asp192, and His249 each coordinate Fe cation. Lys264 contacts 2-oxoglutarate.

It belongs to the iron/ascorbate-dependent oxidoreductase family. Requires Fe(2+) as cofactor.

Its pathway is antifungal biosynthesis. Its function is as follows. 2-oxoglutarate-dependent dioxygenase; part of the gene cluster that mediates the biosynthesis of echinocandin B, a fungal lipidated cyclic hexapeptide that acts as an antifungal agent. Linoleoyl-AMP, produced by the fatty-acyl-AMP ligase ecdI, is transferred to the initiation carrier domain (T0) of ecdA. The linoleoyl-S-phosphopantetheinyl-T0 is sequentially extended with L-ornithine, L-threonine, L-proline, L-homotyrosine, L-threonine, and 4R-methyl-L-proline to form the linear hexapeptide. Thereafter, the terminal condensation (C7) performs macrocyclization of the NRPS product and the cyclic scaffold is released from ecdA. All six of the amino acid residues are hydroxylated, including 4R,5R-dihydroxy-L-ornithine, 4R-hydroxyl-L-proline, 3S,4S-dihydroxy-L-homotyrosine, and 3S-hydroxyl-4S-methyl-L-prolin. In the pathway, all the hydroxylation reactions are proposed to occur following completion of the cyclic peptide, so the unhydroxylated precursor produced by ecdA will undergo six rounds of hydroxylation. Five hydroxylase genes (ecdG, ecdH, ecdK, htyE and htyF) are embedded within the echinocandin B (ecd) and L-homotyrosine (hty) clusters. The protein is 2-oxoglutarate-dependent dioxygenase ecdG of Aspergillus rugulosus (Emericella rugulosa).